A 481-amino-acid chain; its full sequence is Ribulose bisphosphate carboxylase large chain (481 aa).

The propeptide occupies 1-2 (MS). P3 carries the N-acetylproline modification. An N6,N6,N6-trimethyllysine modification is found at K14. Residues N123 and T173 each contribute to the substrate site. K175 functions as the Proton acceptor in the catalytic mechanism. K177 is a binding site for substrate. 3 residues coordinate Mg(2+): K201, D203, and E204. Position 201 is an N6-carboxylysine (K201). H294 serves as the catalytic Proton acceptor. Residues R295, H327, and S379 each coordinate substrate.

The protein belongs to the RuBisCO large chain family. Type I subfamily. Heterohexadecamer of 8 large chains and 8 small chains; disulfide-linked. The disulfide link is formed within the large subunit homodimers. Mg(2+) is required as a cofactor. Post-translationally, the disulfide bond which can form in the large chain dimeric partners within the hexadecamer appears to be associated with oxidative stress and protein turnover.

The protein resides in the plastid. The catalysed reaction is 2 (2R)-3-phosphoglycerate + 2 H(+) = D-ribulose 1,5-bisphosphate + CO2 + H2O. It catalyses the reaction D-ribulose 1,5-bisphosphate + O2 = 2-phosphoglycolate + (2R)-3-phosphoglycerate + 2 H(+). In terms of biological role, ruBisCO catalyzes two reactions: the carboxylation of D-ribulose 1,5-bisphosphate, the primary event in carbon dioxide fixation, as well as the oxidative fragmentation of the pentose substrate in the photorespiration process. Both reactions occur simultaneously and in competition at the same active site. The sequence is that of Ribulose bisphosphate carboxylase large chain from Cuscuta sandwichiana (Kauna'oa).